A 672-amino-acid chain; its full sequence is DNA ligase (672 aa).

NAD(+) contacts are provided by residues 32–36 (DEKYD), 82–83 (SL), and Glu113. The active-site N6-AMP-lysine intermediate is Lys115. 4 residues coordinate NAD(+): Arg136, Glu173, Lys290, and Lys314. Zn(2+)-binding residues include Cys408, Cys411, Cys427, and Cys433. The region spanning 592–672 (DNNNTLFRKK…EFLNIINVYL (81 aa)) is the BRCT domain.

It belongs to the NAD-dependent DNA ligase family. LigA subfamily. Mg(2+) is required as a cofactor. It depends on Mn(2+) as a cofactor.

The catalysed reaction is NAD(+) + (deoxyribonucleotide)n-3'-hydroxyl + 5'-phospho-(deoxyribonucleotide)m = (deoxyribonucleotide)n+m + AMP + beta-nicotinamide D-nucleotide.. Its function is as follows. DNA ligase that catalyzes the formation of phosphodiester linkages between 5'-phosphoryl and 3'-hydroxyl groups in double-stranded DNA using NAD as a coenzyme and as the energy source for the reaction. It is essential for DNA replication and repair of damaged DNA. The protein is DNA ligase of Buchnera aphidicola subsp. Baizongia pistaciae (strain Bp).